Consider the following 120-residue polypeptide: Adult-specific rigid cuticular protein 11.9 (120 aa).

Positions 9-87 (GGAYNFGYNT…ALAAMAPKAP (79 aa)) constitute a Chitin-binding type R&amp;R domain.

In terms of biological role, component of the rigid cuticle of the spider. This is Adult-specific rigid cuticular protein 11.9 from Araneus diadematus (European garden spider).